The primary structure comprises 577 residues: Isocitrate dehydrogenase kinase/phosphatase (577 aa).

ATP-binding positions include 318 to 324 (APGVRGM) and lysine 339. Aspartate 374 is a catalytic residue.

The protein belongs to the AceK family.

The protein localises to the cytoplasm. It catalyses the reaction L-seryl-[isocitrate dehydrogenase] + ATP = O-phospho-L-seryl-[isocitrate dehydrogenase] + ADP + H(+). Functionally, bifunctional enzyme which can phosphorylate or dephosphorylate isocitrate dehydrogenase (IDH) on a specific serine residue. This is a regulatory mechanism which enables bacteria to bypass the Krebs cycle via the glyoxylate shunt in response to the source of carbon. When bacteria are grown on glucose, IDH is fully active and unphosphorylated, but when grown on acetate or ethanol, the activity of IDH declines drastically concomitant with its phosphorylation. This Pseudomonas aeruginosa (strain ATCC 15692 / DSM 22644 / CIP 104116 / JCM 14847 / LMG 12228 / 1C / PRS 101 / PAO1) protein is Isocitrate dehydrogenase kinase/phosphatase.